The sequence spans 635 residues: 1-deoxy-D-xylulose-5-phosphate synthase (635 aa).

Residues H74 and 115–117 contribute to the thiamine diphosphate site; that span reads AHS. D146 lines the Mg(2+) pocket. Residues 147 to 148, N176, Y283, and E365 each bind thiamine diphosphate; that span reads GA. N176 contributes to the Mg(2+) binding site.

This sequence belongs to the transketolase family. DXPS subfamily. As to quaternary structure, homodimer. Requires Mg(2+) as cofactor. The cofactor is thiamine diphosphate.

It carries out the reaction D-glyceraldehyde 3-phosphate + pyruvate + H(+) = 1-deoxy-D-xylulose 5-phosphate + CO2. It participates in metabolic intermediate biosynthesis; 1-deoxy-D-xylulose 5-phosphate biosynthesis; 1-deoxy-D-xylulose 5-phosphate from D-glyceraldehyde 3-phosphate and pyruvate: step 1/1. Catalyzes the acyloin condensation reaction between C atoms 2 and 3 of pyruvate and glyceraldehyde 3-phosphate to yield 1-deoxy-D-xylulose-5-phosphate (DXP). The chain is 1-deoxy-D-xylulose-5-phosphate synthase from Polaromonas sp. (strain JS666 / ATCC BAA-500).